Here is a 146-residue protein sequence, read N- to C-terminus: Putative transposon Ty5-1 protein YCL075W (146 aa).

The sequence is that of Putative transposon Ty5-1 protein YCL075W (TY5B) from Saccharomyces cerevisiae (strain ATCC 204508 / S288c) (Baker's yeast).